Reading from the N-terminus, the 393-residue chain is MSTEETKKEQALQNYRDRLIEHKNAELRLNKAHELIKKLKKDFQKTEDHIKTIQYIGEIIGEVLRSLDEERFIVKACNGPRYVVRCANYQDKAHLLVPGARVTLDLTTLTILKILPREVDPIIFNMTAESPGSVSYGEIGGLSNQIRELREVVELPLMIPELFIRVGIKAPKGVLLYGPPGTGKTLLARAIASNLEANFLKVVSSAIVDKYIGESARVIREMFGYARDHQPCVIFMDEIDAIGGRRFSEGTSADREIQRTLMELLNQMDGFDTLSKVKIIMATNRPDVLDPALLRPGRLDRKIEIPLPNEAGRVDVLKIHAANITKHGDVDYEAIAKLADGFNAADLRNVCTEAGMFAIRAERDYVMEEDFMKAVRKCQEAKKLEGKLDYQKV.

178-185 serves as a coordination point for ATP; sequence GPPGTGKT.

The protein belongs to the AAA ATPase family.

It is found in the cytoplasm. The protein resides in the nucleus. In terms of biological role, the 26S proteasome is involved in the ATP-dependent degradation of ubiquitinated proteins. The regulatory (or ATPase) complex confers ATP dependency and substrate specificity to the 26S complex. In Dictyostelium discoideum (Social amoeba), this protein is 26S proteasome regulatory subunit 10B (psmC6).